A 40-amino-acid polypeptide reads, in one-letter code: Protein 4.1 (40 aa).

In Escherichia phage T7 (Bacteriophage T7), this protein is Protein 4.1.